Reading from the N-terminus, the 361-residue chain is Probable sugar phosphate/phosphate translocator At1g12500 (361 aa).

Val2 carries the post-translational modification N-acetylvaline. A run of 9 helical transmembrane segments spans residues 56 to 76 (TILTAAIIAAWFGSNIGVLLL), 90 to 110 (IFLTMTHMLSCAAYSSAVINI), 125 to 145 (FLKILSLSAIFCLSVVCGNTS), 153 to 173 (FNQAIGATTPFFTAVFSFLIT), 192 to 212 (IVLASNSEPSFHLFGFLICVA), 240 to 260 (LLLYMAPMAACILLPFTLYIE), 276 to 296 (LIIFLLAGNATVAYLVNLTNF), 306 to 326 (TLQVLGNGKAAVAAGVSVLIF), and 329 to 349 (PVTVMGIAGFGVTIMGVVLYS). One can recognise an EamA domain in the interval 89–196 (PIFLTMTHML…PVVSGIVLAS (108 aa)).

Belongs to the TPT transporter family. TPT (TC 2.A.7.9) subfamily.

It is found in the membrane. This Arabidopsis thaliana (Mouse-ear cress) protein is Probable sugar phosphate/phosphate translocator At1g12500.